A 348-amino-acid chain; its full sequence is Phosphate acyltransferase (348 aa).

It belongs to the PlsX family. Homodimer. Probably interacts with PlsY.

The protein resides in the cytoplasm. It catalyses the reaction a fatty acyl-[ACP] + phosphate = an acyl phosphate + holo-[ACP]. It participates in lipid metabolism; phospholipid metabolism. In terms of biological role, catalyzes the reversible formation of acyl-phosphate (acyl-PO(4)) from acyl-[acyl-carrier-protein] (acyl-ACP). This enzyme utilizes acyl-ACP as fatty acyl donor, but not acyl-CoA. This chain is Phosphate acyltransferase, found in Nitrosomonas europaea (strain ATCC 19718 / CIP 103999 / KCTC 2705 / NBRC 14298).